The sequence spans 359 residues: Cysteine/Cysteine sulfinic acid decarboxylase (359 aa).

The protein in the N-terminal section; belongs to the HFCD (homo-oligomeric flavin containing Cys decarboxylase) superfamily. It in the C-terminal section; belongs to the PPC synthetase family.

The catalysed reaction is L-cysteine + H(+) = cysteamine + CO2. The enzyme catalyses 3-sulfino-L-alanine + H(+) = hypotaurine + CO2. With respect to regulation, slightly stimulated in the presence of 1 mM Mg(2+). Functionally, catalyzes the decarboxylation of L-cysteine to cysteamine and of 3-sulfino-L-alanine (cysteine sulfinic acid) to hypotaurine. Also catalyzes the decarboxylation of various amino acids such as L-lysine, L-glutamate, L-asparaginate and L-proline. In vitro, shows highest activity with L-cysteine as substrate. In Unknown prokaryotic organism, this protein is Cysteine/Cysteine sulfinic acid decarboxylase.